The sequence spans 335 residues: Tryptophan--tRNA ligase (335 aa).

Residues 9–11 (QST) and 17–18 (GN) each bind ATP. The 'HIGH' region motif lies at 10-18 (STNSLTLGN). Residue Asp137 participates in L-tryptophan binding. Residues 149–151 (GKD), Ile189, and 198–202 (KMSKS) each bind ATP. Positions 198 to 202 (KMSKS) match the 'KMSKS' region motif.

This sequence belongs to the class-I aminoacyl-tRNA synthetase family. As to quaternary structure, homodimer.

The protein resides in the cytoplasm. It catalyses the reaction tRNA(Trp) + L-tryptophan + ATP = L-tryptophyl-tRNA(Trp) + AMP + diphosphate + H(+). Its function is as follows. Catalyzes the attachment of tryptophan to tRNA(Trp). The protein is Tryptophan--tRNA ligase of Malacoplasma penetrans (strain HF-2) (Mycoplasma penetrans).